The chain runs to 588 residues: Calcium/calmodulin-dependent protein kinase kinase 2 (588 aa).

Over residues 1 to 11 (MSSCVSSQPTS) the composition is skewed to polar residues. 2 disordered regions span residues 1 to 34 (MSSC…KPCE) and 64 to 147 (DLNL…PTVE). An N-acetylserine modification is found at S2. 5 positions are modified to phosphoserine: S99, S114, S129, S133, and S137. Residues 101 to 116 (QEPSQGGPASSSNSLD) show a composition bias toward polar residues. Residues 124-139 (PSLSYSPASSPQSSPR) are compositionally biased toward low complexity. Positions 165–446 (YTLKDEIGKG…VPEIKLHPWV (282 aa)) constitute a Protein kinase domain. ATP contacts are provided by residues 171 to 179 (IGKGSYGVV) and K194. Residues 204 to 226 (QAGFPRRPPPRGARPAPGGCIQP) form an RP domain region. Positions 205–225 (AGFPRRPPPRGARPAPGGCIQ) are disordered. Catalysis depends on D312, which acts as the Proton acceptor. The interval 472–477 (ENSVKH) is autoinhibitory domain. A calmodulin-binding region spans residues 475–500 (VKHIPSLATVILVKTMIRKRSFGNPF). S495, S511, T522, and S572 each carry phosphoserine. The tract at residues 497–588 (GNPFEGSRRE…LQPEEVMEPE (92 aa)) is disordered. Positions 521–536 (PTREWEPLSEPKEARQ) are enriched in basic and acidic residues. Positions 570-580 (PGSPPRMPPLQ) are enriched in pro residues.

This sequence belongs to the protein kinase superfamily. Ser/Thr protein kinase family. In terms of assembly, interacts with calmodulin. Autophosphorylated and phosphorylated by PKA. Each isoform may show a different pattern of phosphorylation. As to expression, expressed in all tissues tested. A differential expression pattern compared to CAMKK1 is observed in the brain.

The protein resides in the nucleus. Its subcellular location is the cytoplasm. It is found in the cell projection. The protein localises to the neuron projection. It catalyses the reaction L-seryl-[protein] + ATP = O-phospho-L-seryl-[protein] + ADP + H(+). The enzyme catalyses L-threonyl-[protein] + ATP = O-phospho-L-threonyl-[protein] + ADP + H(+). With respect to regulation, activated by Ca(2+)/calmodulin. Binding of calmodulin may relieve intrasteric autoinhibition. Autophosphorylation does not alter activity or regulation by Ca(2+)/calmodulin. In part, activity is independent on Ca(2+)/calmodulin. Its function is as follows. Calcium/calmodulin-dependent protein kinase belonging to a proposed calcium-triggered signaling cascade involved in a number of cellular processes. Phosphorylates CAMK1, CAMK4 and CAMK1D. Efficiently phosphorylates 5'-AMP-activated protein kinase (AMPK) trimer, including that consisting of PRKAA1, PRKAB1 and PRKAG1. This phosphorylation is stimulated in response to Ca(2+) signals. May play a role in neurite growth. Isoform 2 may promote neurite elongation, while isoform 1 may promoter neurite branching. May be involved in hippocampal activation of CREB1. The polypeptide is Calcium/calmodulin-dependent protein kinase kinase 2 (Camkk2) (Mus musculus (Mouse)).